We begin with the raw amino-acid sequence, 863 residues long: Scm-like with four MBT domains protein 1 (863 aa).

MBT repeat units lie at residues 20–120 (FSWE…LEAP), 128–232 (SDWS…LQPP), 242–346 (ADWQ…INPP), and 354–451 (FDWA…LSTP). Residues 638-773 (KKKNKRIGRP…SDGENKPPSP (136 aa)) are disordered. Residues 660–679 (KTSKRRKRRKNIFVHKKKRS) show a composition bias toward basic residues. A compositionally biased stretch (polar residues) spans 680-691 (SASVDNTPVGSP). The segment covering 696 to 710 (GEDEDDADDGDDDSL) has biased composition (acidic residues). Phosphoserine is present on residues Ser-764 and Ser-772. An SAM domain is found at 793-861 (WSVADVVRFI…RIKFAFYEQF (69 aa)).

Interacts with MYOD1. Component of the SLC (SFMBT1-LSD1-CoREST) corepressor complex, which also contains KDM1A/LSD1 and RCOR1/CoREST. Interacts with KDM1A/LSD1 and RCOR1/CoREST. Interacts with MYOD1. Interacts with L3MBTL3. Highly expressed in the testis, low expression was detected in brain, kidney, heart and lung.

It is found in the nucleus. Histone-binding protein, which is part of various corepressor complexes. Mediates the recruitment of corepressor complexes to target genes, followed by chromatin compaction and repression of transcription. Plays a role during myogenesis: required for the maintenance of undifferentiated states of myogenic progenitor cells via interaction with MYOD1. Interaction with MYOD1 leads to the recruitment of associated corepressors and silencing of MYOD1 target genes. Part of the SLC complex in germ cells, where it may play a role during spermatogenesis. In Rattus norvegicus (Rat), this protein is Scm-like with four MBT domains protein 1 (Sfmbt1).